The following is a 302-amino-acid chain: MARRALDGVLLLDKPVGLSSNDALMRAKRLYQVKKAGHTGTLDPLASGLLPLCFGEATKFSQDLLEADKTYEATMRLGVRTTTGDAEGDVLDTRDVSCDEAAVRAALARFVGEIVQVPPMYSALKRDGKPLYEYARAGQTVEREGRTVTIRALALVSCALPDVTFRVTCSKGTYVRTLAEDIGEALGCGAHLTMLRRTGVGPLTLEHAVTLDALDAATQDERDARLAPVDALLSTFPCVKLDAALATRFLHGQRLKLSELAARPDAAEGGRVRVYDADDRLLGVARASEGVLAPERLVVTGA.

Aspartate 43 serves as the catalytic Nucleophile.

This sequence belongs to the pseudouridine synthase TruB family. Type 1 subfamily.

The enzyme catalyses uridine(55) in tRNA = pseudouridine(55) in tRNA. Responsible for synthesis of pseudouridine from uracil-55 in the psi GC loop of transfer RNAs. This Burkholderia pseudomallei (strain 668) protein is tRNA pseudouridine synthase B.